Consider the following 381-residue polypeptide: Opsin Rh2 (381 aa).

At 1-56 (MERSHLPETPFDLAHSGPRFQAQSSGNGSVLDNVLPDMAHLVNPYWSRFAPMDPMM) the chain is on the extracellular side. Asn27 carries an N-linked (GlcNAc...) asparagine glycan. Residues 57 to 81 (SKILGLFTLAIMIISCCGNGVVVYI) traverse the membrane as a helical segment. At 82-93 (FGGTKSLRTPAN) the chain is on the cytoplasmic side. Residues 94-119 (LLVLNLAFSDFCMMASQSPVMIINFY) traverse the membrane as a helical segment. Residues 120 to 133 (YETWVLGPLWCDIY) are Extracellular-facing. Residues Cys130 and Cys207 are joined by a disulfide bond. Residues 134–153 (AGCGSLFGCVSIWSMCMIAF) form a helical membrane-spanning segment. Residues 154 to 172 (DRYNVIVKGINGTPMTIKT) are Cytoplasmic-facing. A helical transmembrane segment spans residues 173–196 (SIMKILFIWMMAVFWTVMPLIGWS). Over 197 to 220 (AYVPEGNLTACSIDYMTRMWNPRS) the chain is Extracellular. The chain crosses the membrane as a helical span at residues 221 to 248 (YLITYSLFVYYTPLFLICYSYWFIIAAV). Residues 249–283 (AAHEKAMREQAKKMNVKSLRSSEDCDKSAEGKLAK) lie on the Cytoplasmic side of the membrane. A helical transmembrane segment spans residues 284–307 (VALTTISLWFMAWTPYLVICYFGL). At 308–314 (FKIDGLT) the chain is on the extracellular side. A helical transmembrane segment spans residues 315-339 (PLTTIWGATFAKTSAVYNPIVYGIS). Lys326 carries the post-translational modification N6-(retinylidene)lysine. Topologically, residues 340–381 (HPKYRIVLKEKCPMCVFGNTDEPKPDAPASDTETTSEADSKA) are cytoplasmic. The interval 359 to 381 (TDEPKPDAPASDTETTSEADSKA) is disordered. Polar residues predominate over residues 370-381 (DTETTSEADSKA).

It belongs to the G-protein coupled receptor 1 family. Opsin subfamily. Phosphorylated on some or all of the serine and threonine residues present in the C-terminal region. In terms of tissue distribution, predominant opsin expressed in the dorsal ocelli.

The protein localises to the membrane. Visual pigments are the light-absorbing molecules that mediate vision. They consist of an apoprotein, opsin, covalently linked to cis-retinal. This Drosophila melanogaster (Fruit fly) protein is Opsin Rh2 (Rh2).